Consider the following 877-residue polypeptide: EF-hand domain-containing family member B (877 aa).

Disordered stretches follow at residues 1-47 (MCSF…GRKS) and 268-290 (AQQP…PDRI). EF-hand domains are found at residues 605–640 (QNFD…ACLH) and 641–676 (LDEK…KDKT). Ca(2+)-binding residues include aspartate 618, aspartate 622, glutamate 629, aspartate 654, aspartate 656, aspartate 658, and glutamate 665.

Microtubule inner protein component of sperm flagellar doublet microtubules. Interacts with STIM1 and ORAI1; the interactions take place upon Ca(2+)-store depletion and dissociate through a Ca(2+)-dependent mechanism. Interaction with STIM1 inhibits STIM1 interaction with SARAF. In terms of tissue distribution, expressed in trachea multiciliated cells.

Its subcellular location is the cytoplasm. It is found in the cytoskeleton. It localises to the cilium axoneme. The protein resides in the flagellum axoneme. Microtubule inner protein (MIP) part of the dynein-decorated doublet microtubules (DMTs) in cilia axoneme, which is required for motile cilia beating. Cytosolic sensor for calcium, modulates the interaction of STIM1 and ORAI1 upon store depletion and the activation of store-operated Ca(2+) entry (SOCE) and NFAT translocation from cytosol to nucleus. This Bos taurus (Bovine) protein is EF-hand domain-containing family member B.